The sequence spans 1127 residues: Cellulose synthase-like protein D1 (1127 aa).

Residues 1 to 24 (MASKGILKNGGKPPTAPSSAAPTV) are disordered. Helical transmembrane passes span 262 to 282 (VISP…LFLM) and 292 to 312 (AIWL…SWVL). Residues aspartate 392 and aspartate 828 contribute to the active site. The next 6 helical transmembrane spans lie at 910 to 930 (VFLI…QFIV), 936 to 956 (TFLT…MLEI), 982 to 1002 (LAAV…SFTL), 1025 to 1045 (SLMI…AVGF), 1059 to 1079 (LLGG…FAKG), and 1089 to 1109 (TIVY…WIAI).

It belongs to the glycosyltransferase 2 family. Plant cellulose synthase-like D subfamily.

It localises to the golgi apparatus membrane. Its function is as follows. Thought to be a Golgi-localized beta-glycan synthase that polymerize the backbones of noncellulosic polysaccharides (hemicelluloses) of plant cell wall. The sequence is that of Cellulose synthase-like protein D1 (CSLD1) from Oryza sativa subsp. indica (Rice).